Here is a 485-residue protein sequence, read N- to C-terminus: GTPase Der (485 aa).

EngA-type G domains are found at residues 3 to 167 (PTIA…PEPE) and 176 to 349 (PVFA…NAAM). Residues 9-16 (GRPNVGKS), 56-60 (DTGGF), 119-122 (NKGE), 182-189 (GRPNVGKS), 229-233 (DTAGV), and 294-297 (NKWD) contribute to the GTP site. The region spanning 350-434 (IKMPTPKITR…PLRIQYNVSE (85 aa)) is the KH-like domain. The segment at 435–485 (NPYENAEDKPKKKPLRRVSLSNRIEKREGRKEEKNRFKKKTKVSVKKQFSK) is disordered. Residues 457-469 (RIEKREGRKEEKN) are compositionally biased toward basic and acidic residues. Residues 470–485 (RFKKKTKVSVKKQFSK) show a composition bias toward basic residues.

The protein belongs to the TRAFAC class TrmE-Era-EngA-EngB-Septin-like GTPase superfamily. EngA (Der) GTPase family. Associates with the 50S ribosomal subunit.

In terms of biological role, GTPase that plays an essential role in the late steps of ribosome biogenesis. In Neisseria meningitidis serogroup B (strain ATCC BAA-335 / MC58), this protein is GTPase Der.